Here is a 356-residue protein sequence, read N- to C-terminus: UDP-N-acetylglucosamine--N-acetylmuramyl-(pentapeptide) pyrophosphoryl-undecaprenol N-acetylglucosamine transferase (356 aa).

Residues 11–13, Asn123, Arg159, and Ser192 each bind UDP-N-acetyl-alpha-D-glucosamine; that span reads TAG.

It belongs to the glycosyltransferase 28 family. MurG subfamily.

The protein resides in the cell membrane. The catalysed reaction is di-trans,octa-cis-undecaprenyl diphospho-N-acetyl-alpha-D-muramoyl-L-alanyl-D-glutamyl-meso-2,6-diaminopimeloyl-D-alanyl-D-alanine + UDP-N-acetyl-alpha-D-glucosamine = di-trans,octa-cis-undecaprenyl diphospho-[N-acetyl-alpha-D-glucosaminyl-(1-&gt;4)]-N-acetyl-alpha-D-muramoyl-L-alanyl-D-glutamyl-meso-2,6-diaminopimeloyl-D-alanyl-D-alanine + UDP + H(+). It participates in cell wall biogenesis; peptidoglycan biosynthesis. Cell wall formation. Catalyzes the transfer of a GlcNAc subunit on undecaprenyl-pyrophosphoryl-MurNAc-pentapeptide (lipid intermediate I) to form undecaprenyl-pyrophosphoryl-MurNAc-(pentapeptide)GlcNAc (lipid intermediate II). In Tropheryma whipplei (strain Twist) (Whipple's bacillus), this protein is UDP-N-acetylglucosamine--N-acetylmuramyl-(pentapeptide) pyrophosphoryl-undecaprenol N-acetylglucosamine transferase.